The primary structure comprises 68 residues: uncharacterized protein (68 aa).

The 66-residue stretch at 2–67 folds into the HMA domain; sequence KTITLNIKGI…VIEDAGFDAT (66 aa). Cys13 and Cys16 together coordinate a metal cation.

This is an uncharacterized protein from Haemophilus influenzae (strain ATCC 51907 / DSM 11121 / KW20 / Rd).